Reading from the N-terminus, the 298-residue chain is Syntaxin-4 (298 aa).

Topologically, residues 1–274 are cytoplasmic; that stretch reads MRDRTHELRQ…NQKKARKKKV (274 aa). Residues S15, S29, S35, S36, S117, S208, and S248 each carry the phosphoserine modification. Positions 38 to 163 form a coiled coil; it reads DDEFFQKVQT…ERIRRQLKIT (126 aa). The segment at 154-298 is interaction with CENPF; it reads ERIRRQLKIT…VIIGITITVG (145 aa). The region spanning 200–262 is the t-SNARE coiled-coil homology domain; the sequence is LNEISARHSE…ERGQEHVKIA (63 aa). The helical; Anchor for type IV membrane protein transmembrane segment at 275–295 threads the bilayer; it reads MIAICVSVTVLILAVIIGITI. Over 296 to 298 the chain is Extracellular; the sequence is TVG.

It belongs to the syntaxin family. As to quaternary structure, found in a complex with VAMP8 and SNAP23. Detected in a complex with SNAP23 and STXBP4. Interacts with SNAP23 and SNAPIN. Interacts with VAMP2. Interacts with LLGL1. Interacts (via C-terminus) with CENPF. Interacts with DOC2B. Interacts with STXBP3; excludes interaction with DOC2B and SNAP25. Interacts with STXBP4; excludes interaction with VAMP2. Component of the SNARE complex composed of STX4, SNAP23 and VAMP7 that interacts with SYT7 during lysosomal exocytosis. Interacts with STXBP6. Interacts with STXBP5L. Expressed in all tissues tested including adipose, brain, testis, intestine, liver, heart, spleen, skeletal muscle and kidney.

Its subcellular location is the cell membrane. The protein resides in the cell projection. It is found in the neuron projection. It localises to the stereocilium. Its function is as follows. Plasma membrane t-SNARE that mediates docking of transport vesicles. Necessary for the translocation of SLC2A4 from intracellular vesicles to the plasma membrane. In neurons, recruited at neurite tips to membrane domains rich in the phospholipid 1-oleoyl-2-palmitoyl-PC (OPPC) which promotes neurite tip surface expression of the dopamine transporter SLC6A3/DAT by facilitating fusion of SLC6A3-containing transport vesicles with the plasma membrane. Together with STXB3 and VAMP2, may also play a role in docking/fusion of intracellular GLUT4-containing vesicles with the cell surface in adipocytes and in docking of synaptic vesicles at presynaptic active zones. Required for normal hearing. This Rattus norvegicus (Rat) protein is Syntaxin-4 (Stx4).